The chain runs to 306 residues: Curved DNA-binding protein (306 aa).

A J domain is found at 5–69 (DYYAIMGVKP…QRRAEYDQLW (65 aa)).

It is found in the cytoplasm. Its subcellular location is the nucleoid. Its function is as follows. DNA-binding protein that preferentially recognizes a curved DNA sequence. It is probably a functional analog of DnaJ; displays overlapping activities with DnaJ, but functions under different conditions, probably acting as a molecular chaperone in an adaptive response to environmental stresses other than heat shock. Lacks autonomous chaperone activity; binds native substrates and targets them for recognition by DnaK. Its activity is inhibited by the binding of CbpM. In Citrobacter koseri (strain ATCC BAA-895 / CDC 4225-83 / SGSC4696), this protein is Curved DNA-binding protein.